The following is a 74-amino-acid chain: RNA-binding protein Hfq (74 aa).

The Sm domain maps to 9–69 (DQYLNQLRKN…ISTFSPVKNV (61 aa)).

Belongs to the Hfq family. As to quaternary structure, homohexamer.

RNA chaperone that binds small regulatory RNA (sRNAs) and mRNAs to facilitate mRNA translational regulation in response to envelope stress, environmental stress and changes in metabolite concentrations. Also binds with high specificity to tRNAs. This Oceanobacillus iheyensis (strain DSM 14371 / CIP 107618 / JCM 11309 / KCTC 3954 / HTE831) protein is RNA-binding protein Hfq.